We begin with the raw amino-acid sequence, 347 residues long: GMP reductase (347 aa).

108–131 (ADFEKTVQILALDPALNFVCIDVA) provides a ligand contact to NADP(+). The K(+) site is built by glycine 181 and glycine 183. Catalysis depends on cysteine 186, which acts as the Thioimidate intermediate. 216–239 (IVSDGGCTMPGDVAKAFGGGADFV) lines the NADP(+) pocket.

The protein belongs to the IMPDH/GMPR family. GuaC type 1 subfamily. Homotetramer.

The enzyme catalyses IMP + NH4(+) + NADP(+) = GMP + NADPH + 2 H(+). Functionally, catalyzes the irreversible NADPH-dependent deamination of GMP to IMP. It functions in the conversion of nucleobase, nucleoside and nucleotide derivatives of G to A nucleotides, and in maintaining the intracellular balance of A and G nucleotides. The protein is GMP reductase of Salmonella paratyphi B (strain ATCC BAA-1250 / SPB7).